A 589-amino-acid polypeptide reads, in one-letter code: Kelch-like protein diablo (589 aa).

Residues 1–22 (MGDVLISDRPPSPARLSHTSEK) form a disordered region. The BTB domain maps to 41-108 (CDVVINVSGR…CYTSHIVVEE (68 aa)). One can recognise a BACK domain in the interval 143 to 245 (CLGIRAFADT…SPKFLVGTVG (103 aa)). 6 Kelch repeats span residues 292-338 (VLFA…VLND), 340-386 (LYAV…VLDG), 387-433 (FLYA…VLGG), 435-480 (LYAI…VFNN), 482-527 (IYAV…VVNG), and 528-574 (QLYA…VMRA).

It participates in protein modification; protein ubiquitination. Its function is as follows. Probable substrate-specific adapter of an E3 ubiquitin-protein ligase complex which mediates the ubiquitination and subsequent proteasomal degradation of target proteins. May have a role in synapse differentiation and growth. The polypeptide is Kelch-like protein diablo (Aedes aegypti (Yellowfever mosquito)).